A 182-amino-acid polypeptide reads, in one-letter code: UPF0397 protein BCA_2731 (182 aa).

5 consecutive transmembrane segments (helical) span residues 9-29 (VVAIGIGAALYGILGLWGFSI), 40-60 (AILTVFGALFGPVAGLLIGLI), 71-91 (WGIWWGWVISSGIIGFAMGLI), 114-134 (ITGLIGIVIAIIFAGAFDIIV), and 142-162 (IVIQVLGATIADVIVFLVLGL).

This sequence belongs to the UPF0397 family.

The protein resides in the cell membrane. The protein is UPF0397 protein BCA_2731 of Bacillus cereus (strain 03BB102).